We begin with the raw amino-acid sequence, 318 residues long: Protease HtpX homolog (318 aa).

2 consecutive transmembrane segments (helical) span residues 6–26 (TAML…LIGG) and 28–48 (GGMM…YWNS). Residue His130 coordinates Zn(2+). Glu131 is an active-site residue. Residue His134 coordinates Zn(2+). 2 consecutive transmembrane segments (helical) span residues 145–165 (ITAT…FFGG) and 173–193 (PLGF…AMLV). Position 202 (Glu202) interacts with Zn(2+). Residues 284–318 (NVSTGPVRAVNPTRKSRSVPNTGRGGSQPPRGPWS) form a disordered region.

Belongs to the peptidase M48B family. Zn(2+) is required as a cofactor.

The protein localises to the cell inner membrane. This chain is Protease HtpX homolog, found in Rhizobium etli (strain ATCC 51251 / DSM 11541 / JCM 21823 / NBRC 15573 / CFN 42).